An 89-amino-acid polypeptide reads, in one-letter code: OMEGA-ectatommitoxin(02)-Rm1a (89 aa).

The signal sequence occupies residues 1 to 30; the sequence is MKDSYISIVIAYLMVTFILVSSMPIEGEKG. Intrachain disulfides connect cysteine 39–cysteine 52, cysteine 47–cysteine 68, and cysteine 70–cysteine 79. The EGF-like domain maps to 43–80; that stretch reads YANYCFNGKCVHVVAQDEPGKPCYSCICDKFYIGKRCG.

This sequence belongs to the EGF domain peptide family. As to expression, expressed by the venom gland.

Its subcellular location is the secreted. In terms of biological role, ant peptide with probable defensive activity which acts as a potent agonist of the mammalian epidermal growth factor receptor (EGFR). Mimics, both structurally and functionally, vertebrate epidermal growth factor (EGF) peptide hormones. In vivo, intraplantar injection in mice causes long-lasting (several days) hypersensitivity of the injected paw to both mechanical and thermal stimuli. Its long-lasting effect is unusual for venom toxins whose effects are usually immediate. One possible explanation is that it would reduce the duration of a nest attack, discourage future attacks, or enhance the actions of subsequent exposure to other pain-inducing venom peptides. The polypeptide is OMEGA-ectatommitoxin(02)-Rm1a (Rhytidoponera metallica (Australian green-headed ant)).